We begin with the raw amino-acid sequence, 207 residues long: Ribosomal RNA small subunit methyltransferase G (207 aa).

S-adenosyl-L-methionine-binding positions include Gly-77, Phe-82, 100-102, and Arg-141; that span reads ERS.

Belongs to the methyltransferase superfamily. RNA methyltransferase RsmG family.

Its subcellular location is the cytoplasm. Specifically methylates the N7 position of a guanine in 16S rRNA. The polypeptide is Ribosomal RNA small subunit methyltransferase G (Borrelia turicatae (strain 91E135)).